We begin with the raw amino-acid sequence, 466 residues long: Ras GTPase-activating protein-binding protein 1 (466 aa).

The region spanning V11–Y133 is the NTF2 domain. Glycyl lysine isopeptide (Lys-Gly) (interchain with G-Cter in ubiquitin) cross-links involve residues K36, K50, K59, K64, K76, and K123. Residues V142–E225 form an acidic disordered region region. T143 carries the phosphothreonine modification. Disordered regions lie at residues E144–T172 and E184–Q243. Composition is skewed to acidic residues over residues P145 to E157 and E185 to P206. Position 149 is a phosphoserine (S149). Residues S231, S232, S250, and S253 each carry the phosphoserine modification. Positions T255–E329 are disordered. 2 stretches are compositionally biased toward basic and acidic residues: residues P297–R307 and P318–E329. The RRM domain maps to H340–T415. Residues K353 and K357 each participate in a glycyl lysine isopeptide (Lys-Gly) (interchain with G-Cter in ubiquitin) cross-link. S373 carries the phosphoserine modification. Residue K376 forms a Glycyl lysine isopeptide (Lys-Gly) (interchain with G-Cter in ubiquitin) linkage. K376 carries the N6-acetyllysine; alternate modification. A Glycyl lysine isopeptide (Lys-Gly) (interchain with G-Cter in SUMO2); alternate cross-link involves residue K376. K393 is covalently cross-linked (Glycyl lysine isopeptide (Lys-Gly) (interchain with G-Cter in ubiquitin); alternate). The interval V410–Q466 is RG-rich region. The segment covering K413–L428 has biased composition (basic and acidic residues). The interval K413 to Q466 is disordered. Residue R429 is modified to Asymmetric dimethylarginine. The segment covering G430–R447 has biased composition (gly residues). R435 bears the Asymmetric dimethylarginine; alternate mark. R435 is subject to Dimethylated arginine; alternate. R435 is subject to Omega-N-methylarginine; alternate. At R447 the chain carries Omega-N-methylarginine. R460 is subject to Dimethylated arginine; alternate. At R460 the chain carries Omega-N-methylarginine; alternate. An Omega-N-methylarginine modification is found at R465.

In terms of assembly, homodimer and oligomer. Component of a TAU mRNP complex, at least composed of IGF2BP1, ELAVL4 and G3BP1. Binds to the SH3 domain of Ras GTPase-activating protein (RASA1) in proliferating cells. No interaction in quiescent cells. Interacts (via NTF2 domain) with USP10; inhibiting stress granule formation by lowering G3BP1 valence. Interacts (via NTF2 domain) with CAPRIN1; promoting stress granule formation by lowering the saturation-concentration of G3BP1. Interacts (via NTF2 domain) with UBAP2L; promoting stress granule formation. Associates (via RG-rich region) with 40S ribosome subunits. Interacts with RPTOR and SPAG5; this complex is increased by oxidative stress. Interacts with ATXN2L. Interacts with STYXL1. Interacts with CGAS (via N-terminus); this interaction promotes the DNA-binding and activation of CGAS. Interacts (via C-terminus) with RIGI. Interacts with PABPC1. Interacts with QKI (isoforms QKI6 and QKI7); directing N(7)-methylguanine-containing mRNAs to stress granules. As to quaternary structure, (Microbial infection) Interacts with Semliki forest virus non-structural protein 3 (via C-terminus); this interaction inhibits the formation of stress granules on viral mRNAs and the nsp3-G3BP1 complexes bind viral RNAs and probably orchestrate the assembly of viral replication complexes. (Microbial infection) Interacts with Chikungunya virus non-structural protein 3 (via C-terminus); this interaction inhibits the formation of stress granules on viral mRNAs and the nsp3-G3BP1 complexes bind viral RNAs and probably orchestrate the assembly of viral replication complexes. In terms of assembly, (Microbial infection) Interacts with Sindbis virus non-structural protein 3 (via C-terminus); this interaction inhibits the formation of stress granules on viral mRNAs and the nsp3-G3BP1 complexes bind viral RNAs and probably orchestrate the assembly of viral replication complexes. As to quaternary structure, (Microbial infection) Interacts with Zika virus capsid protein C; this interaction is probably linked to the inhibition of stress granules formation by the virus. (Microbial infection) Interacts with reovirus type 2 protein sigma-NS; this interaction induces the relocalization of G3BP1 to the outer periphery of sigma-NS/mu-Ns viral factories and is probably involved in the suppression of the integrated stress response by the virus. In terms of assembly, (Microbial infection) Interacts with SARS-CoV-2 N protein; the interaction is enhanced by host HDAC6 which deacetylates the viral N protein and promotes N protein association with G3BP1, disrupting stress granule formation and facilitating viral replication. Interacts with HDAC6; the interaction increases during SARS-CoV-2 infection. It depends on Mg(2+) as a cofactor. Phosphorylation of the acidic disordered region regulates stress granule assembly. RASA1-dependent phosphorylation of Ser-149 induces a conformational change that prevents self-association. Dephosphorylation after HRAS activation is required for stress granule assembly. Ser-149 phosphorylation induces partial nuclear localization. Post-translationally, ubiquitinated by TRIM21 via 'Lys-63'-linked polyubiquitination in the NTF2 domain in response to heat shock, leading to stress granule disassembly: ubiquitination promotes interaction with the FAF2 adapter, followed by interaction with VCP, which extracts G3BP1 from stress granules, leading to stress granule disassembly. In case of prolonged stress, ubiquitination by TRIM21 leads to autophagy-dependent degradation of G3BP1 via recruitment of ubiquitinated G3BP1 by SQSTM1 and/or CALCOCO2 to autophagosomes. In terms of processing, (Microbial infection) Cleaved by human enterovirus 71; this cleavage induces the disassembly of cytoplasmic stress granules. Cleaved by Foot-and-mouth disease virus; this cleavage suppresses the formation of cytoplasmic stress granules. Arg-435 is dimethylated, probably to asymmetric dimethylarginine. Post-translationally, (Microbial infection) Cleaved by Encephalomyocarditis virus protease 3C; this cleavage suppresses the formation of cytoplasmic stress granules. Ubiquitous.

Its subcellular location is the cytoplasm. The protein resides in the cytosol. The protein localises to the perikaryon. It localises to the stress granule. It is found in the nucleus. It carries out the reaction ATP + H2O = ADP + phosphate + H(+). Its activity is regulated as follows. Under physiological conditions, G3BP1 adopts a compact state that is stabilized by intramolecular interactions between the RG-rich and the acidic regions that inhibit phase separation. Upon stress, polysomes disassemble and mRNAs are released in an unfolded protein-free state. Binding of unfolded mRNA to G3BP1 outcompetes the intramolecular interactions and RNA-bound G3BP1 adopts an expanded conformation in which the RG-rich region becomes exposed to engage in protein-protein and protein-RNA interactions, allowing physical cross-linking of RNA molecules to form protein-RNA condensates, leading to liquid-liquid phase separation (LLPS). In terms of biological role, protein involved in various processes, such as stress granule formation and innate immunity. Plays an essential role in stress granule formation. Stress granules are membraneless compartments that store mRNAs and proteins, such as stalled translation pre-initiation complexes, in response to stress. Promotes formation of stress granules phase-separated membraneless compartment by undergoing liquid-liquid phase separation (LLPS) upon unfolded RNA-binding: functions as a molecular switch that triggers RNA-dependent LLPS in response to a rise in intracellular free RNA concentrations. Also acts as an ATP- and magnesium-dependent helicase: unwinds DNA/DNA, RNA/DNA, and RNA/RNA substrates with comparable efficiency. Acts unidirectionally by moving in the 5' to 3' direction along the bound single-stranded DNA. Unwinds preferentially partial DNA and RNA duplexes having a 17 bp annealed portion and either a hanging 3' tail or hanging tails at both 5'- and 3'-ends. Plays an essential role in innate immunity by promoting CGAS and RIGI activity. Participates in the DNA-triggered cGAS/STING pathway by promoting the DNA binding and activation of CGAS. Triggers the condensation of cGAS, a process probably linked to the formation of membrane-less organelles. Also enhances RIGI-induced type I interferon production probably by helping RIGI at sensing pathogenic RNA. May also act as a phosphorylation-dependent sequence-specific endoribonuclease in vitro: Cleaves exclusively between cytosine and adenine and cleaves MYC mRNA preferentially at the 3'-UTR. The chain is Ras GTPase-activating protein-binding protein 1 from Homo sapiens (Human).